Reading from the N-terminus, the 537-residue chain is ESX-2 secretion system protein EccE2 (537 aa).

Residues 31–51 (ALGGQLGAVMAVVVGVALVFV) form a helical membrane-spanning segment.

This sequence belongs to the EccE family. As to quaternary structure, could be part of the ESX-2 / type VII secretion system (T7SS), which is composed of cytosolic and membrane components.

It is found in the cell membrane. In Mycobacterium tuberculosis (strain CDC 1551 / Oshkosh), this protein is ESX-2 secretion system protein EccE2 (eccE2).